Reading from the N-terminus, the 353-residue chain is N-terminal EF-hand calcium-binding protein 3 (353 aa).

The EF-hand domain occupies 27–62 (AGHALFQDVFRRADKNDDGKLSFEEFQNYFADGVLS). Residues Asp-40, Asn-42, Asp-44, Lys-46, and Glu-51 each contribute to the Ca(2+) site. Positions 172 to 181 (IKAQSRPCGS) are required for interaction with APBA3. Residues 193–203 (SWSPSWSPGSS) are compositionally biased toward low complexity. The disordered stretch occupies residues 193 to 213 (SWSPSWSPGSSDTGRSSEAEQ). The segment covering 204 to 213 (DTGRSSEAEQ) has biased composition (polar residues). One can recognise an ABM domain in the interval 253–342 (LVAQRQVQVA…QAPDTLTTVF (90 aa)).

In terms of assembly, interacts with the N-terminal domain of APBA2. Interacts with NEK2. Interacts with APBA3; APBA3 seems to mediate the interaction between NECAB3 and HIF1AN. In terms of processing, phosphorylated by NEK2. Widely expressed, with highest levels in the brain.

The protein localises to the golgi apparatus. Inhibits the interaction of APBA2 with amyloid-beta precursor protein (APP), and hence allows formation of amyloid-beta. May enhance the activity of HIF1A and thus promote glycolysis under normoxic conditions; the function requires its ABM domain and may implicate the stabilization of the interaction between HIF1AN and APBA3. This chain is N-terminal EF-hand calcium-binding protein 3 (Necab3), found in Mus musculus (Mouse).